The following is a 167-amino-acid chain: Calcium-binding protein CML19 (167 aa).

4 EF-hand domains span residues Q23 to E58, M59 to E94, D96 to N131, and F132 to G167. Residues D36, D38, S40, S42, E47, D72, N74, S76, E83, D109, D111, N113, K115, D120, D145, D147, D149, E151, and E156 each coordinate Ca(2+).

The protein belongs to the centrin family. Interacts with RAD4. Calcium is required for this interaction. Interacts with SAC3B. As to expression, expressed in leaves, roots, and at lower level in stems. Barely detectable in flower buds and flowers.

The protein localises to the cytoplasm. Its subcellular location is the nucleus. Potential calcium sensor that binds calcium in vitro. Modulates homologous recombination and nucleotide excision repair (NER). Involved in the early response to UV irradiation. The sequence is that of Calcium-binding protein CML19 from Arabidopsis thaliana (Mouse-ear cress).